A 247-amino-acid chain; its full sequence is 2,3-bisphosphoglycerate-dependent phosphoglycerate mutase (247 aa).

Residues 8–15, 21–22, R60, 87–90, K98, 114–115, and 183–184 each bind substrate; these read RHGESTWN, TG, ERHY, RR, and GN. H9 acts as the Tele-phosphohistidine intermediate in catalysis. The active-site Proton donor/acceptor is E87.

Belongs to the phosphoglycerate mutase family. BPG-dependent PGAM subfamily. As to quaternary structure, homodimer.

It catalyses the reaction (2R)-2-phosphoglycerate = (2R)-3-phosphoglycerate. Its pathway is carbohydrate degradation; glycolysis; pyruvate from D-glyceraldehyde 3-phosphate: step 3/5. Catalyzes the interconversion of 2-phosphoglycerate and 3-phosphoglycerate. The sequence is that of 2,3-bisphosphoglycerate-dependent phosphoglycerate mutase from Delftia acidovorans (strain DSM 14801 / SPH-1).